The primary structure comprises 593 residues: Transcriptional repressor p66-beta (593 aa).

Ser-17 carries the post-translational modification Phosphoserine. Residues Lys-33, Lys-66, and Lys-97 each participate in a glycyl lysine isopeptide (Lys-Gly) (interchain with G-Cter in SUMO2) cross-link. The interval 62–123 (ELPTKQDGSG…PERGRLTPSP (62 aa)) is disordered. Basic and acidic residues-rich tracts occupy residues 74–100 (GYEE…KENI) and 108–118 (SARRSEPERGR). Residue Thr-120 is modified to Phosphothreonine. Phosphoserine occurs at positions 122, 129, 134, and 135. Residues 140–194 (SRMEERLKAANLEMFKGKGIEERQQLIKQLRDELRLEEARLVLLKKLRQSQLQKE) are a coiled coil. A Glycyl lysine isopeptide (Lys-Gly) (interchain with G-Cter in SUMO2) cross-link involves residue Lys-147. Positions 165–195 (LIKQLRDELRLEEARLVLLKKLRQSQLQKEN) are CR1; interaction with MBD2 and MBD3. Residue Lys-199 forms a Glycyl lysine isopeptide (Lys-Gly) (interchain with G-Cter in SUMO2) linkage. Position 208 is a phosphoserine (Ser-208). Residues 213-235 (SPAHVGQQGLSKLPSRPGAQGVE) form a disordered region. Residue Lys-281 forms a Glycyl lysine isopeptide (Lys-Gly) (interchain with G-Cter in SUMO2) linkage. Phosphoserine occurs at positions 333, 338, and 340. A CR2; histone tail-binding region spans residues 340–480 (SAMTDAANSQ…QEQEIEQRLQ (141 aa)). Glycyl lysine isopeptide (Lys-Gly) (interchain with G-Cter in SUMO2) cross-links involve residues Lys-353, Lys-454, and Lys-467. Residues 414–467 (RVEPFVCAQCRTDFTPHWKQEKNGKILCEQCMTSNQKKALKAEHTNRLKNAFVK) form a GATA-type zinc finger. The stretch at 449–482 (QKKALKAEHTNRLKNAFVKALQQEQEIEQRLQQQ) forms a coiled coil. A Phosphoserine modification is found at Ser-486. Lys-498 participates in a covalent cross-link: Glycyl lysine isopeptide (Lys-Gly) (interchain with G-Cter in SUMO2).

As to quaternary structure, homooligomer. Component of the nucleosome remodeling and deacetylase (NuRD) repressor complex, composed of core proteins MTA1, MTA2, MTA3, RBBP4, RBBP7, HDAC1, HDAC2, MBD2, MBD3, and peripherally associated proteins CDK2AP1, CDK2AP2, GATAD2A, GATAD2B, CHD3, CHD4 and CHD5. The exact stoichiometry of the NuRD complex is unknown, and some subunits such as MBD2 and MBD3, GATAD2A and GATAD2B, and CHD3, CHD4 and CHD5 define mutually exclusive NuRD complexes. Interacts with MBD2; this is required for the enhancement of MBD2-mediated repression and for targeting to the chromatin. Interacts with MBD3. Component of the MeCP1 histone deacetylase complex. Interacts with histone tails, including that of histones H2A, H2B, H3 and H4. Interacts with ERCC6. Widely expressed.

It localises to the nucleus speckle. Its subcellular location is the nucleus. The protein resides in the chromosome. In terms of biological role, transcriptional repressor. Acts as a component of the histone deacetylase NuRD complex which participates in the remodeling of chromatin. Enhances MBD2-mediated repression. Efficient repression requires the presence of GATAD2A. Targets MBD3 to discrete loci in the nucleus. May play a role in synapse development. The protein is Transcriptional repressor p66-beta (GATAD2B) of Homo sapiens (Human).